The chain runs to 58 residues: Enterocin-HF (58 aa).

Positions 1–15 are excised as a propeptide; that stretch reads MEKLTVKEMSQVVGG. Cysteines 24 and 29 form a disulfide.

Its subcellular location is the secreted. Bacteriocin. This chain is Enterocin-HF (entHF), found in Enterococcus faecium (Streptococcus faecium).